A 264-amino-acid chain; its full sequence is MSNSNIHTTAIIAEGAKFGKNVKVGPYCIIGPEVVLHDNVELKSHVVIDGITEIGENTVIYPFASIGQPPQILKYANERSSTIIGSNNTIREYVTVQAGSKSGGMITRVGNNNLFMVGVHIGHDCKIGNNLVFANYVSLAGHIKVGDYAIIGGLSAVHQYTRIGEYSMIGGLSPVGADVIPFGLVSSKRAVLEGLNLIGMNRKGFDKADSLTALNAVEEIFLGEGNFVDRIKQVAEKYKNNSIVTQIIDFLNQDSSRAFCHFKK.

The protein belongs to the transferase hexapeptide repeat family. LpxA subfamily. As to quaternary structure, homotrimer.

The protein resides in the cytoplasm. It catalyses the reaction a (3R)-hydroxyacyl-[ACP] + UDP-N-acetyl-alpha-D-glucosamine = a UDP-3-O-[(3R)-3-hydroxyacyl]-N-acetyl-alpha-D-glucosamine + holo-[ACP]. It functions in the pathway glycolipid biosynthesis; lipid IV(A) biosynthesis; lipid IV(A) from (3R)-3-hydroxytetradecanoyl-[acyl-carrier-protein] and UDP-N-acetyl-alpha-D-glucosamine: step 1/6. Functionally, involved in the biosynthesis of lipid A, a phosphorylated glycolipid that anchors the lipopolysaccharide to the outer membrane of the cell. The protein is Acyl-[acyl-carrier-protein]--UDP-N-acetylglucosamine O-acyltransferase of Rickettsia prowazekii (strain Madrid E).